Here is a 143-residue protein sequence, read N- to C-terminus: Large ribosomal subunit protein uL11 (143 aa).

The protein belongs to the universal ribosomal protein uL11 family. Part of the ribosomal stalk of the 50S ribosomal subunit. Interacts with L10 and the large rRNA to form the base of the stalk. L10 forms an elongated spine to which L12 dimers bind in a sequential fashion forming a multimeric L10(L12)X complex. One or more lysine residues are methylated.

Forms part of the ribosomal stalk which helps the ribosome interact with GTP-bound translation factors. The protein is Large ribosomal subunit protein uL11 of Bifidobacterium longum (strain DJO10A).